The sequence spans 110 residues: Coiled-coil-helix-coiled-coil-helix domain-containing protein 5 (110 aa).

N-acetylmethionine is present on M1. 2 CHCH domains span residues 9-52 (ARYC…PIIR) and 55-97 (RQAC…QPPS). 4 consecutive short sequence motifs (cx9C motif) follow at residues 12-22 (CSRELDQYGQC), 34-44 (CHHLKMSIARC), 58-68 (CAEPFEAFEKC), and 79-89 (CAEHMRRFLQC). Cystine bridges form between C12–C44, C22–C34, C58–C89, and C68–C79.

In terms of assembly, monomer.

The protein resides in the mitochondrion intermembrane space. This is Coiled-coil-helix-coiled-coil-helix domain-containing protein 5 (Chchd5) from Mus musculus (Mouse).